A 607-amino-acid polypeptide reads, in one-letter code: Homologous recombination OB-fold protein (607 aa).

Disordered stretches follow at residues 25 to 49 (LRPNSSRPQETPQAHSSKLSPSYPA), 84 to 108 (ISSSSSGSQQRMTGTKVSQESSGRQ), 196 to 308 (PWPS…TTVT), and 531 to 581 (LKPP…DDLD). 2 stretches are compositionally biased toward polar residues: residues 27–49 (PNSSRPQETPQAHSSKLSPSYPA) and 92–108 (QQRMTGTKVSQESSGRQ). The residue at position 30 (Ser-30) is a Phosphoserine. Residue Arg-281 is modified to Asymmetric dimethylarginine. Positions 295–308 (SPFSTPRSTSTTVT) are enriched in low complexity. Over residues 570–581 (PEEELPEADDLD) the composition is skewed to acidic residues.

In terms of assembly, interacts with MCM8; this interaction is necessary for MCM8-MCM9 helicase complex recruitment to DNA damage sites. Interacts with RPA1; this interaction associates HROB with the RPA complex.

Its subcellular location is the nucleus. It localises to the chromosome. In terms of biological role, DNA-binding protein involved in homologous recombination that acts by recruiting the MCM8-MCM9 helicase complex to sites of DNA damage to promote DNA repair synthesis. The protein is Homologous recombination OB-fold protein of Rattus norvegicus (Rat).